The following is a 376-amino-acid chain: Probable inactive protein kinase At3g63330 (376 aa).

Residues 1–370 enclose the Protein kinase domain; sequence MVERGPTVYL…VDEALQHPYF (370 aa).

This sequence belongs to the protein kinase superfamily. Ser/Thr protein kinase family.

The sequence is that of Probable inactive protein kinase At3g63330 from Arabidopsis thaliana (Mouse-ear cress).